We begin with the raw amino-acid sequence, 889 residues long: Translation initiation factor IF-2 (889 aa).

The tract at residues 158–296 (LKEKQEKRRQ…KYKSDELQSQ (139 aa)) is disordered. The segment covering 209-228 (AAATPATSTAPATTSTTAAT) has biased composition (low complexity). A compositionally biased stretch (basic and acidic residues) spans 238 to 270 (VKPEEKGEKKKKPTKQDAWKDEPVKRREPKARG). One can recognise a tr-type G domain in the interval 391-560 (PRAPVVTVMG…LLQAEVLELK (170 aa)). The interval 400–407 (GHVDHGKT) is G1. Residue 400–407 (GHVDHGKT) coordinates GTP. The segment at 425 to 429 (GITQH) is G2. The segment at 446–449 (DTPG) is G3. GTP-binding positions include 446–450 (DTPGH) and 500–503 (NKMD). Residues 500 to 503 (NKMD) form a G4 region. The tract at residues 536-538 (SAK) is G5.

Belongs to the TRAFAC class translation factor GTPase superfamily. Classic translation factor GTPase family. IF-2 subfamily.

It localises to the cytoplasm. Functionally, one of the essential components for the initiation of protein synthesis. Protects formylmethionyl-tRNA from spontaneous hydrolysis and promotes its binding to the 30S ribosomal subunits. Also involved in the hydrolysis of GTP during the formation of the 70S ribosomal complex. The protein is Translation initiation factor IF-2 of Nitrosomonas europaea (strain ATCC 19718 / CIP 103999 / KCTC 2705 / NBRC 14298).